The chain runs to 1331 residues: uncharacterized protein (1331 aa).

Transmembrane regions (helical) follow at residues 373–393, 487–507, 534–554, 579–599, 653–673, 1206–1226, 1255–1275, and 1297–1317; these read VIGVGISPDFVYPVFSASLIV, ALFLTIAILTVAIIVSILILI, LLIFGLIPAIVGAISGYSFGI, VVGLLFFSLFVILIMSSISLL, LVFLTLMSSFTMMILNLSFAT, VIAVIIPIIMLIILLVSTTLI, IPLFAFGLLISIPFSIYLIAL, and AIGSMLVLLAVLSITFVLNWL.

The protein belongs to the ABC-4 integral membrane protein family.

It localises to the cell membrane. This is an uncharacterized protein from Mycoplasma genitalium (strain ATCC 33530 / DSM 19775 / NCTC 10195 / G37) (Mycoplasmoides genitalium).